Reading from the N-terminus, the 371-residue chain is tRNA-specific 2-thiouridylase MnmA (371 aa).

Residues Gly13–Ser20 and Met39 contribute to the ATP site. Positions Asn99–Asp101 are interaction with target base in tRNA. Residue Cys104 is the Nucleophile of the active site. The cysteines at positions 104 and 200 are disulfide-linked. Gly128 lines the ATP pocket. Positions Lys150–Gln152 are interaction with tRNA. The active-site Cysteine persulfide intermediate is Cys200. The tract at residues Arg308–Tyr309 is interaction with tRNA.

This sequence belongs to the MnmA/TRMU family.

It is found in the cytoplasm. The catalysed reaction is S-sulfanyl-L-cysteinyl-[protein] + uridine(34) in tRNA + AH2 + ATP = 2-thiouridine(34) in tRNA + L-cysteinyl-[protein] + A + AMP + diphosphate + H(+). Catalyzes the 2-thiolation of uridine at the wobble position (U34) of tRNA, leading to the formation of s(2)U34. This Listeria welshimeri serovar 6b (strain ATCC 35897 / DSM 20650 / CCUG 15529 / CIP 8149 / NCTC 11857 / SLCC 5334 / V8) protein is tRNA-specific 2-thiouridylase MnmA.